The primary structure comprises 1369 residues: Phosphoribosylformylglycinamidine synthase (1369 aa).

Disordered regions lie at residues 321–352 and 373–400; these read HPTAISPFPGASTGAGGEIRDEGATGRGAKPK and ENARDTAQPAAQRNPGDTAPGPVGKPDR. 330-341 lines the ATP pocket; sequence GASTGAGGEIRD. Ala-721 serves as a coordination point for ATP. Positions 722, 761, 765, and 934 each coordinate Mg(2+). Ser-936 lines the ATP pocket. The region spanning 1116-1369 is the Glutamine amidotransferase type-1 domain; that stretch reads MAILREQGVN…MFRNARKQMG (254 aa). Cys-1209 acts as the Nucleophile in catalysis. Residues His-1330 and Glu-1332 contribute to the active site.

The protein in the N-terminal section; belongs to the FGAMS family. Monomer.

The protein localises to the cytoplasm. The enzyme catalyses N(2)-formyl-N(1)-(5-phospho-beta-D-ribosyl)glycinamide + L-glutamine + ATP + H2O = 2-formamido-N(1)-(5-O-phospho-beta-D-ribosyl)acetamidine + L-glutamate + ADP + phosphate + H(+). The protein operates within purine metabolism; IMP biosynthesis via de novo pathway; 5-amino-1-(5-phospho-D-ribosyl)imidazole from N(2)-formyl-N(1)-(5-phospho-D-ribosyl)glycinamide: step 1/2. In terms of biological role, phosphoribosylformylglycinamidine synthase involved in the purines biosynthetic pathway. Catalyzes the ATP-dependent conversion of formylglycinamide ribonucleotide (FGAR) and glutamine to yield formylglycinamidine ribonucleotide (FGAM) and glutamate. In Ralstonia nicotianae (strain ATCC BAA-1114 / GMI1000) (Ralstonia solanacearum), this protein is Phosphoribosylformylglycinamidine synthase.